We begin with the raw amino-acid sequence, 154 residues long: Superoxide dismutase [Cu-Zn] (154 aa).

Cu cation contacts are provided by His-47, His-49, and His-64. The cysteines at positions 58 and 147 are disulfide-linked. His-64, His-72, His-81, and Asp-84 together coordinate Zn(2+). His-121 contacts Cu cation. Arg-144 provides a ligand contact to substrate.

Belongs to the Cu-Zn superoxide dismutase family. Homodimer. It depends on Cu cation as a cofactor. Zn(2+) is required as a cofactor.

The protein localises to the cytoplasm. It catalyses the reaction 2 superoxide + 2 H(+) = H2O2 + O2. Functionally, destroys radicals which are normally produced within the cells and which are toxic to biological systems. The sequence is that of Superoxide dismutase [Cu-Zn] (sodC) from Aspergillus fumigatus (strain ATCC MYA-4609 / CBS 101355 / FGSC A1100 / Af293) (Neosartorya fumigata).